The chain runs to 281 residues: Pantothenate synthetase (281 aa).

An ATP-binding site is contributed by M30 to H37. H37 serves as the catalytic Proton donor. Q61 contacts (R)-pantoate. Q61 lines the beta-alanine pocket. G149 to D152 provides a ligand contact to ATP. Q155 serves as a coordination point for (R)-pantoate. Residues I178 and M186–R189 contribute to the ATP site.

The protein belongs to the pantothenate synthetase family. In terms of assembly, homodimer.

Its subcellular location is the cytoplasm. It carries out the reaction (R)-pantoate + beta-alanine + ATP = (R)-pantothenate + AMP + diphosphate + H(+). It participates in cofactor biosynthesis; (R)-pantothenate biosynthesis; (R)-pantothenate from (R)-pantoate and beta-alanine: step 1/1. Its function is as follows. Catalyzes the condensation of pantoate with beta-alanine in an ATP-dependent reaction via a pantoyl-adenylate intermediate. This chain is Pantothenate synthetase, found in Shewanella sediminis (strain HAW-EB3).